A 196-amino-acid polypeptide reads, in one-letter code: UPF0134 protein MPN_501 (196 aa).

The protein belongs to the UPF0134 family.

This is UPF0134 protein MPN_501 from Mycoplasma pneumoniae (strain ATCC 29342 / M129 / Subtype 1) (Mycoplasmoides pneumoniae).